A 397-amino-acid chain; its full sequence is Pyruvate dehydrogenase E1 component subunit alpha, mitochondrial (397 aa).

Pyruvate contacts are provided by His-98, Tyr-124, Arg-125, Gly-173, Val-175, Asp-204, Gly-205, Ala-206, Asn-233, and Tyr-235. Thiamine diphosphate contacts are provided by Tyr-124, Arg-125, Gly-173, Val-175, Asp-204, Gly-205, Ala-206, and Asn-233. Mg(2+) is bound at residue Asp-204. Mg(2+)-binding residues include Asn-233 and Tyr-235. His-299 is a thiamine diphosphate binding site.

In terms of assembly, tetramer of 2 alpha and 2 beta subunits. Thiamine diphosphate is required as a cofactor. Mg(2+) serves as cofactor.

Its subcellular location is the mitochondrion matrix. The catalysed reaction is N(6)-[(R)-lipoyl]-L-lysyl-[protein] + pyruvate + H(+) = N(6)-[(R)-S(8)-acetyldihydrolipoyl]-L-lysyl-[protein] + CO2. With respect to regulation, E1 activity is regulated by phosphorylation (inactivation) and dephosphorylation (activation) of the alpha subunit. The pyruvate dehydrogenase complex catalyzes the overall conversion of pyruvate to acetyl-CoA and CO(2). It contains multiple copies of three enzymatic components: pyruvate dehydrogenase (E1), dihydrolipoamide acetyltransferase (E2) and lipoamide dehydrogenase (E3). This chain is Pyruvate dehydrogenase E1 component subunit alpha, mitochondrial, found in Pisum sativum (Garden pea).